A 421-amino-acid chain; its full sequence is Synaptotagmin-1 (421 aa).

Residues 1–57 lie on the Vesicular side of the membrane; the sequence is MVSASRPEALAAPVTTVATLVPHNATEPASPGEGKEDAFSKLKQKFMNELHKIPLPP. N-linked (GlcNAc...) asparagine glycosylation is present at asparagine 24. Residues 58–79 form a helical membrane-spanning segment; that stretch reads WALIAIAIVAVLLVVTCCFCVC. Residues cysteine 74, cysteine 75, cysteine 77, cysteine 79, and cysteine 82 are each lipidated (S-palmitoyl cysteine). Residues 80 to 421 are Cytoplasmic-facing; the sequence is KKCLFKKKNK…EVDAMLAVKK (342 aa). Residues 112–141 are disordered; that stretch reads TMKDQALKDDDAETGLTDGEEKEEPKEEEK. Residues 121-133 are compositionally biased toward acidic residues; the sequence is DDAETGLTDGEEK. Residue threonine 128 is modified to Phosphothreonine. The tract at residues 135–381 is phospholipid binding; that stretch reads EPKEEEKLGK…AIGKVFVGYN (247 aa). The C2 1 domain maps to 141 to 260; that stretch reads KLGKLQYSLD…DFGHVTEEWR (120 aa). 3 residues coordinate Ca(2+): leucine 171, aspartate 172, and aspartate 178. Tyrosine 229 carries the post-translational modification Phosphotyrosine. The Ca(2+) site is built by aspartate 230, phenylalanine 231, aspartate 232, serine 235, lysine 236, and aspartate 238. Serine 264 bears the Phosphoserine mark. One can recognise a C2 2 domain in the interval 272-405; sequence KLGDICFSLR…NPRRPIAQWH (134 aa). Aspartate 303 and aspartate 309 together coordinate Ca(2+). Phosphoserine is present on residues serine 342 and serine 344. Positions 363, 365, and 371 each coordinate Ca(2+).

The protein belongs to the synaptotagmin family. Homotetramer. Heterodimer; heterodimerizes with SYT2 in presence of calcium. Interacts with SCAMP5. Interacts with STON2. Forms a complex with SV2B, syntaxin 1 and SNAP25. Interacts with SV2A, SV2B and SV2C. Interacts with RIMS1. Interacts with PRRT2. Interacts with DNAJC5 in a phosphorylation-dependent manner. Interacts (via N-terminus) with RAB3A. Interacts with SYT12. Interacts with calmodulin. Interacts with DNM1 (via C-terminal proline-rich domain (PRD)); this interaction facilitates vesicle fission during clathrin-mediated endocytosis (CME). Ca(2+) is required as a cofactor. Post-translationally, glycosylated. As to expression, expressed in the brain and adrenal medulla (at protein level).

The protein localises to the cytoplasmic vesicle. It localises to the secretory vesicle membrane. Its subcellular location is the secretory vesicle. It is found in the synaptic vesicle membrane. The protein resides in the chromaffin granule membrane. The protein localises to the cytoplasm. Calcium sensor that participates in triggering neurotransmitter release at the synapse. May have a regulatory role in the membrane interactions during trafficking of synaptic vesicles at the active zone of the synapse. It binds acidic phospholipids with a specificity that requires the presence of both an acidic head group and a diacyl backbone. A Ca(2+)-dependent interaction between synaptotagmin and putative receptors for activated protein kinase C has also been reported. It can bind to at least three additional proteins in a Ca(2+)-independent manner; these are neurexins, syntaxin and AP2. Plays a role in dendrite formation by melanocytes. The protein is Synaptotagmin-1 of Mus musculus (Mouse).